The chain runs to 644 residues: Subversion of eukaryotic traffic protein A (644 aa).

The tract at residues 1-400 (MYKIYSYLGW…FHTLLSQVSD (400 aa)) is glucosyltransferase. Positions 401–644 (PVNPTAHELK…EYDNNHGLRI (244 aa)) are ptdIns(3)P-binding and localization domain.

Post-translationally, ubiquitinated and polyubiquitinated when ectopically produced in both yeast and mammalian cells; however it is unsure if this modification occurs during the L.pneumophila infection of host cells.

It is found in the secreted. In terms of biological role, secreted effector that interferes with vesicular trafficking of host cells. Possesses glucohydrolase and mono-O-glucosyltransferase activity by using UDP-glucose as a sugar donor substrate. Is able to glucosylate histones H4 and H3.1 in vitro, but it is unlikely that histones are the natural substrates for SetA. May glycosylate a component of the host cell vesicle trafficking machinery during L.pneumophila infection. Binds with high specificity to phosphatidylinositol 3-phosphate (PtdIns(3)P), (with a dissociation constant value of 809 nM), which guides SetA to the cytosolic leaflet of the early phagosome of the host cell. In Legionella pneumophila subsp. pneumophila (strain Philadelphia 1 / ATCC 33152 / DSM 7513), this protein is Subversion of eukaryotic traffic protein A (setA).